A 316-amino-acid polypeptide reads, in one-letter code: Pantothenate kinase (316 aa).

An ATP-binding site is contributed by 95-102 (GSVAVGKS).

It belongs to the prokaryotic pantothenate kinase family.

The protein localises to the cytoplasm. The catalysed reaction is (R)-pantothenate + ATP = (R)-4'-phosphopantothenate + ADP + H(+). It participates in cofactor biosynthesis; coenzyme A biosynthesis; CoA from (R)-pantothenate: step 1/5. The protein is Pantothenate kinase of Shigella boydii serotype 18 (strain CDC 3083-94 / BS512).